Here is a 194-residue protein sequence, read N- to C-terminus: Fe/S biogenesis protein NfuA (194 aa).

Positions 151 and 154 each coordinate [4Fe-4S] cluster.

It belongs to the NfuA family. As to quaternary structure, homodimer. The cofactor is [4Fe-4S] cluster.

In terms of biological role, involved in iron-sulfur cluster biogenesis. Binds a 4Fe-4S cluster, can transfer this cluster to apoproteins, and thereby intervenes in the maturation of Fe/S proteins. Could also act as a scaffold/chaperone for damaged Fe/S proteins. The protein is Fe/S biogenesis protein NfuA of Aliivibrio fischeri (strain ATCC 700601 / ES114) (Vibrio fischeri).